A 328-amino-acid chain; its full sequence is DNA-directed RNA polymerase subunit alpha (328 aa).

The alpha N-terminal domain (alpha-NTD) stretch occupies residues Met1–Glu231. The interval Phe248 to Arg328 is alpha C-terminal domain (alpha-CTD).

Belongs to the RNA polymerase alpha chain family. In terms of assembly, homodimer. The RNAP catalytic core consists of 2 alpha, 1 beta, 1 beta' and 1 omega subunit. When a sigma factor is associated with the core the holoenzyme is formed, which can initiate transcription.

It carries out the reaction RNA(n) + a ribonucleoside 5'-triphosphate = RNA(n+1) + diphosphate. In terms of biological role, DNA-dependent RNA polymerase catalyzes the transcription of DNA into RNA using the four ribonucleoside triphosphates as substrates. This chain is DNA-directed RNA polymerase subunit alpha, found in Leptothrix cholodnii (strain ATCC 51168 / LMG 8142 / SP-6) (Leptothrix discophora (strain SP-6)).